A 1520-amino-acid polypeptide reads, in one-letter code: MKNVEFSLERGQRLKMPARKLREIVSPNQGNKLAVVEDELPRVPPALAANKRLAVETRTSSNGTLCGSLDLTSARLYHQPLLESPPASKKSDFSKDAVVRQLPLNKTEENNAPKANDIFISQYTMGQKDALRTVLKQKAQSMPVFKAVKVHLFEDTSTEKNTVAQETETPPNRIDSATTVAAATAAAIATAAPLIKVQSDLEAKVNCVGELLTKLQETDKQLQRVTEHQASVQSKQEKVHCHDHDKQMNAFMEQHIRHLEKLQQQQIDIQTHFIDAALKASSLQLGMSTSRAVGKYSGKLGSPSVGSSVFSHNTFVSKRVPLSEDTDFDGQKSPLETPAPRRFAPVPVSRDGKITKRESPTEEKENMEMNSPKGNVRLLEQVLNSNECLTRKTESSDITSLTQPKMGWNLEKRDSTETLHSQIFPSSEERGTAQVPVPKYNDVVHDLGQKKQASDMLQIKQSPVTLRLSDHPHNPALLQTTNTRSVLKDAAKILRGVQNNKKVLEENLEAIVRAKDGAAMYSFINALATNREMSEKIRIRKQVDEWIKIISAEIQDELMRKDYEQKRFDPKNQRNKKALTMSRDIKANNQEKTVNRSVIPRSHYQKQTQEQFTSPPVRNLPASGPQKERSGLLKSATTLQDEDYMLQIYGKPVYQGHRSTLKKGPYLRFSSPSPKAKPQRPRVIELVKGTKVKSAKTQTDFHAASRMKMDSKIQHPITALPHADQQYMVSPSREMPTVSGTLEGHLIPMAILLGQTQSNSDSMPPAGVTVNKPRPVTVTTSIPPASRKGNAGVKKPNVAIVEMKSEKKDPPQLSVQILPSVDIDSVSYSSTDGASSPPSPKEASLPPLHTWIQTPDFMKVDEEEVPLPGTNFDEVIDVIQEEEKRDEIPECSAPMLEFNRSVKVVPTKYNGPSFPPVVSAYHPTTDILDKVIERKETLENSLIQWVEQEIMSRIISGLFPLQQQARLDASVSVSEASEPSASDIVAGTSSGALQRMVDARVPVNSDMVSHFVNEALTETIAVMLADREAERQRAAATSVPGDLSGTETNLLARVCAPVATPQPTPPCSPSPVREHVRVKTPDSSPCESDPDAASSIKEIRVEKGSDMPAVMLVSTPTRTPVATPPPAAALTPTLSETSIDKLKLSSPELPKPWDSGDLPLDEENPNSLQELPHPRAVVMSVANEEPESVDFSAQPAPPEPAPSAPLPEGTKAPSLQRVPSSGSSTLENTLSTVTETETLDRHISEGEILFSCGQNLATKRPGDLFLMNINDSLSSTLQDALEMEDDPPSEGQVIRRPHKKRHEDAIVALLTKQQRELLVSQQEEDLDNSVGELSEGQRLVLKAAEDISAGPSGQMLPPTSPAEPSYQHADPRLVLQQSDMASGNICEDLCASHGPMSLRELELQPDSNLILPITHTTTAVSDGNLPEAAEDFSQYQQKQDSDIKQVEHKPIQRHLTSVRNKPDSTLSQHQGGPADLLLIAHVSPARMSVTLPSANLEDCSQSLSTSSMHGGTESSGTDTF.

The segment at 322-370 is disordered; it reads LSEDTDFDGQKSPLETPAPRRFAPVPVSRDGKITKRESPTEEKENMEMN. Residues 350 to 367 are compositionally biased toward basic and acidic residues; it reads RDGKITKRESPTEEKENM. Ser-426 carries the phosphoserine modification. The segment at 485–572 is required for centrosomal localization; it reads SVLKDAAKIL…YEQKRFDPKN (88 aa). The stretch at 487–519 forms a coiled coil; the sequence is LKDAAKILRGVQNNKKVLEENLEAIVRAKDGAA. 7 disordered regions span residues 568-632, 759-793, 826-848, 1060-1093, 1145-1170, 1184-1230, and 1500-1520; these read FDPK…RSGL, NSDS…NAGV, VSYS…LPPL, TPQP…PDAA, SSPE…SLQE, EEPE…ENTL, and SQSL…TDTF. Polar residues-rich tracts occupy residues 587 to 596 and 605 to 616; these read ANNQEKTVNR and QKQTQEQFTSPP. Polar residues predominate over residues 826 to 836; the sequence is VSYSSTDGASS. 2 positions are modified to phosphothreonine: Thr-1060 and Thr-1064. Over residues 1060–1069 the composition is skewed to pro residues; it reads TPQPTPPCSP. At Ser-1068 the chain carries Phosphoserine. Thr-1080 carries the phosphothreonine modification. Ser-1083 is modified (phosphoserine). Over residues 1195-1205 the composition is skewed to pro residues; that stretch reads PAPPEPAPSAP. Positions 1217 to 1230 are enriched in polar residues; that stretch reads RVPSSGSSTLENTL.

Belongs to the TALPID3 family. Interacts with CEP120. Interacts with CCP110, CEP290, CEP97, KIF24. As to expression, expressed in photoreceptor cells (at protein level).

Its subcellular location is the cytoplasm. The protein resides in the cytoskeleton. It localises to the microtubule organizing center. It is found in the centrosome. The protein localises to the photoreceptor inner segment. Its subcellular location is the centriole. The protein resides in the cilium basal body. In terms of biological role, required for ciliogenesis and sonic hedgehog/SHH signaling. Required for the centrosomal recruitment of RAB8A and for the targeting of centriole satellite proteins to centrosomes such as of PCM1. May play a role in early ciliogenesis in the disappearance of centriolar satellites that preceeds ciliary vesicle formation. Involved in regulation of cell intracellular organization. Involved in regulation of cell polarity. Required for asymmetrical localization of CEP120 to daughter centrioles. This chain is Protein TALPID3 (Talpid3), found in Mus musculus (Mouse).